The primary structure comprises 298 residues: ADP/ATP translocase 1 (298 aa).

At 1 to 7 the chain is on the mitochondrial intermembrane side; that stretch reads MSDQALS. Serine 2 carries the post-translational modification N-acetylserine. One copy of the Solcar 1 repeat lies at 6 to 98; it reads LSFLKDFLAG…FAFKDKYKQI (93 aa). Position 7 is a phosphoserine (serine 7). A helical transmembrane segment spans residues 8 to 37; that stretch reads FLKDFLAGGVAAAISKTAVAPIERVKLLLQ. Residues 38 to 74 lie on the Mitochondrial matrix side of the membrane; it reads VQHASKQISAEKQYKGIIDCVVRIPKEQGFLSFWRGN. Lysine 52 bears the N6,N6,N6-trimethyllysine mark. Position 52 is an N6-methyllysine (lysine 52). Residues 75–99 form a helical membrane-spanning segment; sequence LANVIRYFPTQALNFAFKDKYKQIF. Arginine 80 and lysine 92 together coordinate ADP. The Mitochondrial intermembrane segment spans residues 100–109; sequence LGGVDRHKQF. The chain crosses the membrane as a helical span at residues 110 to 130; it reads WRYFAGNLASGGAAGATSLCF. Solcar repeat units follow at residues 111 to 201 and 212 to 297; these read RYFA…AKGM and VSWM…IKKF. Residues 131–178 are Mitochondrial matrix-facing; the sequence is VYPLDFARTRLAADVGKGAAQREFTGLGNCITKIFKSDGLRGLYQGFN. An N6-succinyllysine modification is found at lysine 147. Cysteine 160 bears the S-nitrosocysteine mark. The helical transmembrane segment at 179–199 threads the bilayer; that stretch reads VSVQGIIIYRAAYFGVYDTAK. Residues 200–210 lie on the Mitochondrial intermembrane side of the membrane; sequence GMLPDPKNVHI. A helical membrane pass occupies residues 211–231; the sequence is IVSWMIAQTVTAVAGLVSYPF. At 232-273 the chain is on the mitochondrial matrix side; the sequence is DTVRRRMMMQSGRKGADIMYTGTVDCWRKIAKDEGPKAFFKG. Arginine 235 serves as a coordination point for ADP. The segment at 235-240 is important for transport activity; it reads RRRMMM. Positions 235–240 match the Nucleotide carrier signature motif motif; the sequence is RRRMMM. Lysine 245 and lysine 272 each carry N6-succinyllysine. The helical transmembrane segment at 274–291 threads the bilayer; sequence AWSNVLRGMGGAFVLVLY. Residues 292-298 lie on the Mitochondrial intermembrane side of the membrane; sequence DEIKKFV.

The protein belongs to the mitochondrial carrier (TC 2.A.29) family. Monomer. Found in a complex with ARL2, ARL2BP and SLC25A4/ANT1. Interacts with ARL2BP. Interacts with TIMM44; leading to inhibit the presequence translocase TIMM23, thereby promoting stabilization of PINK1. Post-translationally, under cell death induction, transglutaminated by TGM2. Transglutamination leads to formation of covalent cross-links between a glutamine and the epsilon-amino group of a lysine residue, forming polymers. As to expression, detected in heart muscle (at protein level). Detected in heart.

Its subcellular location is the mitochondrion inner membrane. It is found in the membrane. The enzyme catalyses ADP(in) + ATP(out) = ADP(out) + ATP(in). It catalyses the reaction H(+)(in) = H(+)(out). With respect to regulation, the matrix-open state (m-state) is inhibited by the membrane-permeable bongkrekic acid (BKA). The cytoplasmic-open state (c-state) is inhibited by the membrane-impermeable toxic inhibitor carboxyatractyloside (CATR). Proton transporter activity is inhibited by ADP:ATP antiporter activity. In terms of biological role, ADP:ATP antiporter that mediates import of ADP into the mitochondrial matrix for ATP synthesis, and export of ATP out to fuel the cell. Cycles between the cytoplasmic-open state (c-state) and the matrix-open state (m-state): operates by the alternating access mechanism with a single substrate-binding site intermittently exposed to either the cytosolic (c-state) or matrix (m-state) side of the inner mitochondrial membrane. In addition to its ADP:ATP antiporter activity, also involved in mitochondrial uncoupling and mitochondrial permeability transition pore (mPTP) activity. Plays a role in mitochondrial uncoupling by acting as a proton transporter: proton transport uncouples the proton flows via the electron transport chain and ATP synthase to reduce the efficiency of ATP production and cause mitochondrial thermogenesis. Proton transporter activity is inhibited by ADP:ATP antiporter activity, suggesting that SLC25A4/ANT1 acts as a master regulator of mitochondrial energy output by maintaining a delicate balance between ATP production (ADP:ATP antiporter activity) and thermogenesis (proton transporter activity). Proton transporter activity requires free fatty acids as cofactor, but does not transport it. Probably mediates mitochondrial uncoupling in tissues that do not express UCP1. Also plays a key role in mPTP opening, a non-specific pore that enables free passage of the mitochondrial membranes to solutes of up to 1.5 kDa, and which contributes to cell death. It is however unclear if SLC25A4/ANT1 constitutes a pore-forming component of mPTP or regulates it. Acts as a regulator of mitophagy independently of ADP:ATP antiporter activity: promotes mitophagy via interaction with TIMM44, leading to inhibit the presequence translocase TIMM23, thereby promoting stabilization of PINK1. This chain is ADP/ATP translocase 1, found in Bos taurus (Bovine).